Reading from the N-terminus, the 262-residue chain is ATP synthase subunit a (262 aa).

5 helical membrane-spanning segments follow: residues 26-46 (VHID…FVFS), 86-106 (VAPL…IDLI), 130-150 (DISA…FYTI), 204-226 (LIFI…GIPL), and 240-260 (LQAF…YNKA).

This sequence belongs to the ATPase A chain family. As to quaternary structure, F-type ATPases have 2 components, CF(1) - the catalytic core - and CF(0) - the membrane proton channel. CF(1) has five subunits: alpha(3), beta(3), gamma(1), delta(1), epsilon(1). CF(0) has three main subunits: a(1), b(2) and c(9-12). The alpha and beta chains form an alternating ring which encloses part of the gamma chain. CF(1) is attached to CF(0) by a central stalk formed by the gamma and epsilon chains, while a peripheral stalk is formed by the delta and b chains.

The protein resides in the cell inner membrane. Its function is as follows. Key component of the proton channel; it plays a direct role in the translocation of protons across the membrane. This is ATP synthase subunit a from Haemophilus influenzae (strain PittEE).